The following is a 1843-amino-acid chain: Nonribosomal peptide synthetase SIDD (1843 aa).

The tract at residues 1–83 (MLSIDDHGGG…QQQQQQQQRS (83 aa)) is disordered. Residues 65-81 (QQQQQQQQQQQQQQQQQ) show a composition bias toward low complexity. The tract at residues 133-528 (TYSELEHLST…TEVEHHIQTC (396 aa)) is adenylation 1. The interval 628-647 (KLGATHADEGPQEEPETDAE) is disordered. In terms of domain architecture, Carrier 1 spans 641–716 (EPETDAEKKL…AMANKSTSIS (76 aa)). Ser677 carries the post-translational modification O-(pantetheine 4'-phosphoryl)serine. Positions 753 to 1175 (VEDVYPCTPL…ALSDDDAAAL (423 aa)) are condensation 1. In terms of domain architecture, Carrier 2 spans 1289 to 1365 (SATSQRQRRL…EMAAVMECTD (77 aa)). Residue Ser1326 is modified to O-(pantetheine 4'-phosphoryl)serine. Positions 1447-1734 (FFDGPVDLRR…LREIAENCGL (288 aa)) are condensation 2.

This sequence belongs to the NRP synthetase family. Requires pantetheine 4'-phosphate as cofactor.

It participates in siderophore biosynthesis. Nonribosomal peptide synthetase; part of the gene cluster that mediates the biosynthesis of at least 11 siderophores, including beauverichelin A, dimerumic acid (DA), Na-dimethyl coprogen (NADC), eleutherazine B, ferricrocin (FC), fusarinine A, fusarinine C (FsC), metachelin A, mevalonolactone, rhodotorulic acid (RA) and tenellin. This cocktail of siderophores for iron metabolism is essential for virulence, and more specifically for the fungal virulence in penetrating through the host cuticle. Siderophore synthesis is also involved in conidial germination under iron-deficient conditions. SIDC catalyzes the assembly of ferricrocin whereas SIDD catalyzes the assembly of fusarinine C. The sequence is that of Nonribosomal peptide synthetase SIDD from Beauveria bassiana (strain ARSEF 2860) (White muscardine disease fungus).